A 546-amino-acid chain; its full sequence is MDLVSFAFSGPATHADQAPLYIDAKRPSRSLSEAPFRRLVRSLVAGFKAYGVERGDTVLVQLDNLVIHSALLFGIVGAGGVYMGCSPSSPRHELDHFVSLVEPRLILTVASALSVVRDVCTNKGISWSQICLVDDQSVDHLVSFAQNQSYNPQATPPVRDEGVHFDLKDMVSFGESDWMRIYDEATARITPAAMFSTSGTSGLPKAAIRTHHTIISHHQTVHYDVPYPVTRLMALPMSHSFGDFWSNLFPIRYGHPLYVMPRFDLSTFLNVVHRYNITETYLVPAMVHILNQSTLPVRESLGSLFYIGVSGAPIDADSLQRCQKLLNPQACIGQLWGMTEVGVIFQNRYGDQRYPGSIGKLLENYDIRLVRLDDGTTIHGESTPGELYVRGPGIMLAYQGRDDGIDAQGWFRTGDIAYSEDEHYHIVGRTKELIKVRGYSVAPAEIEAVLLKDPRVHDTMVIGITLPDGSTEVPRAYVVCALGQARPTADEVSALALKNLASYKALDGGVIFVESLPRTGIGKPHRSKLSHLDAQRTKLAALLSPV.

194–205 contacts AMP; that stretch reads MFSTSGTSGLPK. Positions 445–523 are AMP-binding; sequence EIEAVLLKDP…ESLPRTGIGK (79 aa).

This sequence belongs to the ATP-dependent AMP-binding enzyme family.

It carries out the reaction nicotinate + ATP + CoA = nicotinyl-CoA + AMP + diphosphate. It participates in secondary metabolite biosynthesis; terpenoid biosynthesis. Functionally, nicotinic acid-CoA ligase; part of the gene cluster that mediates the biosynthesis of 15-deoxyoxalicine B. The first step of the pathway is the synthesis of nicotinyl-CoA from nicotinic acid by the nicotinic acid-CoA ligase olcI. Nicotinyl-CoA is then a substrate of polyketide synthase olcA to produce 4-hydroxy-6-(3-pyridinyl)-2H-pyran-2-one (HPPO) which is further prenylated by the polyprenyl transferase olcH to yield geranylgeranyl-HPPO. Geranylgeranyl pyrophosphate is provided by the cluster-specific geranylgeranyl pyrophosphate synthase olcC. The FAD-dependent monooxygenase olcE catalyzes the epoxidation of geranylgeranyl-HPPO and the terpene cyclase olcD catalyzes the cyclization of the terpenoid component, resulting in the formation of the tricyclic terpene moiety seen in predecaturin E. The cytochrome P450 monooxygenase then catalyzes the allylic oxidation of predecaturin E, which is followed by spirocylization with concomitant loss of one molecule of water to form decaturin E. Decaturin E is the substrate of the cytochrome P450 monooxygenase olcJ which hydroxylates it at the C-29 position to form decaturin F. The short-chain dehydrogenase/reductase olcF may catalyze the oxidation of decaturin F to generate the 29-hydroxyl-27-one intermediate, and subsequent hemiacetal formation probably leads to the formation of decaturin C. The dioxygenase olcK may be a peroxisomal enzyme that catalyzes the hydroxylation of decaturin C into decaturin A once decaturin C is shuttled into the peroxisome by the MFS transporter olcL. Finally the cytochrome P450 monooxygenase olcB catalyzes the oxidative rearrangement to yield 15-deoxyoxalicine B. In the absence of olcJ, decaturin E may be shunted to a pathway in which it is oxidized to a ketone, possibly by olcF, to form decaturin D, which undergoes further allylic oxidation to yield decaturin G. Moreover, in the absence of oclK or oclL, oclB can convert decaturin C into 15-deoxyoxalicine A. The sequence is that of Nicotinic acid-CoA ligase olcI from Penicillium canescens.